Here is a 229-residue protein sequence, read N- to C-terminus: DNA repair protein RecO (229 aa).

Belongs to the RecO family.

Its function is as follows. Involved in DNA repair and RecF pathway recombination. The polypeptide is DNA repair protein RecO (Pseudomonas fluorescens (strain ATCC BAA-477 / NRRL B-23932 / Pf-5)).